We begin with the raw amino-acid sequence, 133 residues long: MNYMPGTASLIEDIDKKHLVLLRDGRTLIGFLRSIDQFANLVLHQTVERIHVGKKYGDIPRGIFVVRGENVVLLGEIDLEKESDTPLQQVSIEEILEEQRVEQQTKLEAEKLKVQALKDRGLSIPRADTLEEY.

A Sm domain is found at 5–80; it reads PGTASLIEDI…VVLLGEIDLE (76 aa). The residue at position 123 (Ser123) is a Phosphoserine. Thr129 bears the Phosphothreonine mark.

It belongs to the snRNP Sm proteins family. In terms of assembly, interacts with SLBP; interaction with SLBP occurs when histone mRNA is being rapidly degraded during the S phase. LSm subunits form a heteromer with a donut shape.

Its subcellular location is the cytoplasm. The protein resides in the P-body. Its function is as follows. Plays a role in the degradation of histone mRNAs, the only eukaryotic mRNAs that are not polyadenylated. Probably also part of an LSm subunits-containing complex involved in the general process of mRNA degradation. The chain is U6 snRNA-associated Sm-like protein LSm1 (LSM1) from Bos taurus (Bovine).